Reading from the N-terminus, the 446-residue chain is Glutamine synthetase (446 aa).

Positions 15–103 (ENVKFLRLQI…LICDVYYPDG (89 aa)) constitute a GS beta-grasp domain. Residues 110–446 (PRYVLKRQIE…WELDRYLATY (337 aa)) enclose the GS catalytic domain. Residues Glu-134 and Glu-136 each coordinate Mg(2+). Glu-186 contributes to the ATP binding site. Residues Glu-191 and Glu-198 each contribute to the Mg(2+) site. Residues 242–243 (NG) and Gly-243 contribute to the L-glutamate site. Residue His-247 coordinates Mg(2+). Ser-251 is an ATP binding site. 3 residues coordinate L-glutamate: Arg-300, Glu-306, and Arg-318. Residues Arg-318 and Arg-323 each coordinate ATP. Glu-335 contributes to the Mg(2+) binding site. Arg-337 lines the L-glutamate pocket.

The protein belongs to the glutamine synthetase family. As to quaternary structure, interacts with GCBP (TTHA1554). Mg(2+) serves as cofactor.

Its subcellular location is the cytoplasm. It catalyses the reaction L-glutamate + NH4(+) + ATP = L-glutamine + ADP + phosphate + H(+). Activity increases by approximately two-fold in the presence of GCBP. Functionally, catalyzes the ATP-dependent biosynthesis of glutamine from glutamate and ammonia. This is Glutamine synthetase from Thermus thermophilus (strain ATCC 27634 / DSM 579 / HB8).